The following is a 267-amino-acid chain: Dolichol-phosphate mannosyltransferase (267 aa).

N-acetylserine is present on Ser-2. The Cytoplasmic portion of the chain corresponds to 2 to 238 (SIEYSVIVPA…QQLKELYVFK (237 aa)). Residues Pro-10, Tyr-12, Glu-14, Val-42, Asp-44, Asp-95, Ala-96, Asp-97, Gln-99, and Arg-122 each contribute to the GDP-alpha-D-mannose site. The Mg(2+) site is built by Asp-97 and Gln-99. The Mn(2+) site is built by Asp-97 and Gln-99. Position 141 is a phosphoserine; by PKA (Ser-141). GDP-alpha-D-mannose-binding residues include Lys-183, Arg-212, and Lys-218. The helical; Anchor for type IV membrane protein transmembrane segment at 239-259 (FGANNLILFITFWSILFFYVC) threads the bilayer. Residues 260-267 (YQLYHLVF) are Lumenal-facing.

It belongs to the glycosyltransferase 2 family. In terms of assembly, interacts with the C-terminus of SAC1, thereby sequestering it to the endoplasmic reticulum in exponentially growing cells. Under nutrient limitation conditions, this interaction is rapidly abolished. Requires Mg(2+) as cofactor. Mn(2+) serves as cofactor. It depends on Ca(2+) as a cofactor.

The protein resides in the endoplasmic reticulum membrane. It carries out the reaction a di-trans,poly-cis-dolichyl phosphate + GDP-alpha-D-mannose = a di-trans,poly-cis-dolichyl beta-D-mannosyl phosphate + GDP. It participates in protein modification; protein glycosylation. Inhibited by acetylsalicylic acid (aspirin). Functionally, transfers mannose from GDP-mannose to dolichol monophosphate to form dolichol phosphate mannose (Dol-P-Man) which is the mannosyl donor in pathways leading to N-glycosylation, glycosyl phosphatidylinositol membrane anchoring, and O-mannosylation of proteins. In Saccharomyces cerevisiae (strain ATCC 204508 / S288c) (Baker's yeast), this protein is Dolichol-phosphate mannosyltransferase.